Reading from the N-terminus, the 250-residue chain is Acidic endochitinase (250 aa).

Gln1 carries the post-translational modification Pyrrolidone carboxylic acid. A Chitin-binding type-1 domain is found at 1–36 (QNCQCDTTIYCCSQHGYCGNSYDYCGPGCQAGPCWD). 7 disulfide bridges follow: Cys3–Cys12, Cys5–Cys18, Cys11–Cys25, Cys29–Cys34, Cys66–Cys115, Cys128–Cys136, and Cys218–Cys250. Residue Glu110 is the Proton donor of the active site.

It belongs to the glycosyl hydrolase 19 family. Chitinase class I subfamily.

It carries out the reaction Random endo-hydrolysis of N-acetyl-beta-D-glucosaminide (1-&gt;4)-beta-linkages in chitin and chitodextrins.. In terms of biological role, defense against chitin-containing fungal pathogens. The protein is Acidic endochitinase of Dioscorea japonica (Japanese yam).